The sequence spans 424 residues: Tyrosine--tRNA ligase (424 aa).

Tyr37 is a binding site for L-tyrosine. The short motif at 42-51 (PTADSLHLGH) is the 'HIGH' region element. Lys144 is modified (N6-acetyllysine). 2 residues coordinate L-tyrosine: Tyr175 and Gln179. The short motif at 235–239 (KFGKT) is the 'KMSKS' region element. Lys238 contacts ATP. The S4 RNA-binding domain maps to 357–414 (ADLMQALVDSELQPSRGQARKTIASNAITINGEKQSDPEYFFKEEDRLFGRFTLLRRG).

It belongs to the class-I aminoacyl-tRNA synthetase family. TyrS type 1 subfamily. In terms of assembly, homodimer.

The protein resides in the cytoplasm. The enzyme catalyses tRNA(Tyr) + L-tyrosine + ATP = L-tyrosyl-tRNA(Tyr) + AMP + diphosphate + H(+). Functionally, catalyzes the attachment of tyrosine to tRNA(Tyr) in a two-step reaction: tyrosine is first activated by ATP to form Tyr-AMP and then transferred to the acceptor end of tRNA(Tyr). This chain is Tyrosine--tRNA ligase, found in Escherichia coli O8 (strain IAI1).